The sequence spans 350 residues: Holliday junction branch migration complex subunit RuvB (350 aa).

The large ATPase domain (RuvB-L) stretch occupies residues 1–184; sequence MSKTPERLVT…FGIPIRLEFY (184 aa). ATP-binding positions include leucine 23, arginine 24, glycine 65, lysine 68, threonine 69, threonine 70, 131–133, arginine 174, tyrosine 184, and arginine 221; that span reads EDF. Threonine 69 contributes to the Mg(2+) binding site. The interval 185-255 is small ATPAse domain (RuvB-S); that stretch reads TIEELERIVL…LADKALSLLD (71 aa). The head domain (RuvB-H) stretch occupies residues 258–350; it reads PIGLDQMDRR…GLFPDQSEED (93 aa). DNA-binding residues include arginine 294, arginine 313, and arginine 318.

This sequence belongs to the RuvB family. Homohexamer. Forms an RuvA(8)-RuvB(12)-Holliday junction (HJ) complex. HJ DNA is sandwiched between 2 RuvA tetramers; dsDNA enters through RuvA and exits via RuvB. An RuvB hexamer assembles on each DNA strand where it exits the tetramer. Each RuvB hexamer is contacted by two RuvA subunits (via domain III) on 2 adjacent RuvB subunits; this complex drives branch migration. In the full resolvosome a probable DNA-RuvA(4)-RuvB(12)-RuvC(2) complex forms which resolves the HJ.

Its subcellular location is the cytoplasm. The enzyme catalyses ATP + H2O = ADP + phosphate + H(+). Functionally, the RuvA-RuvB-RuvC complex processes Holliday junction (HJ) DNA during genetic recombination and DNA repair, while the RuvA-RuvB complex plays an important role in the rescue of blocked DNA replication forks via replication fork reversal (RFR). RuvA specifically binds to HJ cruciform DNA, conferring on it an open structure. The RuvB hexamer acts as an ATP-dependent pump, pulling dsDNA into and through the RuvAB complex. RuvB forms 2 homohexamers on either side of HJ DNA bound by 1 or 2 RuvA tetramers; 4 subunits per hexamer contact DNA at a time. Coordinated motions by a converter formed by DNA-disengaged RuvB subunits stimulates ATP hydrolysis and nucleotide exchange. Immobilization of the converter enables RuvB to convert the ATP-contained energy into a lever motion, pulling 2 nucleotides of DNA out of the RuvA tetramer per ATP hydrolyzed, thus driving DNA branch migration. The RuvB motors rotate together with the DNA substrate, which together with the progressing nucleotide cycle form the mechanistic basis for DNA recombination by continuous HJ branch migration. Branch migration allows RuvC to scan DNA until it finds its consensus sequence, where it cleaves and resolves cruciform DNA. This Beijerinckia indica subsp. indica (strain ATCC 9039 / DSM 1715 / NCIMB 8712) protein is Holliday junction branch migration complex subunit RuvB.